The primary structure comprises 188 residues: Xanthine phosphoribosyltransferase (188 aa).

Xanthine is bound by residues Leu20 and Asn27. Ala127–Ala131 is a binding site for 5-phospho-alpha-D-ribose 1-diphosphate. Lys155 provides a ligand contact to xanthine.

Belongs to the purine/pyrimidine phosphoribosyltransferase family. Xpt subfamily. Homodimer.

The protein resides in the cytoplasm. The catalysed reaction is XMP + diphosphate = xanthine + 5-phospho-alpha-D-ribose 1-diphosphate. It functions in the pathway purine metabolism; XMP biosynthesis via salvage pathway; XMP from xanthine: step 1/1. In terms of biological role, converts the preformed base xanthine, a product of nucleic acid breakdown, to xanthosine 5'-monophosphate (XMP), so it can be reused for RNA or DNA synthesis. This Phocaeicola vulgatus (strain ATCC 8482 / DSM 1447 / JCM 5826 / CCUG 4940 / NBRC 14291 / NCTC 11154) (Bacteroides vulgatus) protein is Xanthine phosphoribosyltransferase.